A 284-amino-acid chain; its full sequence is Bifunctional protein FolD (284 aa).

NADP(+) contacts are provided by residues Gly164–Ser166 and Ile230.

Belongs to the tetrahydrofolate dehydrogenase/cyclohydrolase family. Homodimer.

It catalyses the reaction (6R)-5,10-methylene-5,6,7,8-tetrahydrofolate + NADP(+) = (6R)-5,10-methenyltetrahydrofolate + NADPH. The enzyme catalyses (6R)-5,10-methenyltetrahydrofolate + H2O = (6R)-10-formyltetrahydrofolate + H(+). Its pathway is one-carbon metabolism; tetrahydrofolate interconversion. Its function is as follows. Catalyzes the oxidation of 5,10-methylenetetrahydrofolate to 5,10-methenyltetrahydrofolate and then the hydrolysis of 5,10-methenyltetrahydrofolate to 10-formyltetrahydrofolate. This Mycoplasma capricolum subsp. capricolum (strain California kid / ATCC 27343 / NCTC 10154) protein is Bifunctional protein FolD.